The following is a 530-amino-acid chain: UDP-glucuronosyltransferase 2B17 (530 aa).

A signal peptide spans methionine 1–cysteine 23. Residues valine 494–valine 510 form a helical membrane-spanning segment.

The protein belongs to the UDP-glycosyltransferase family.

The protein resides in the endoplasmic reticulum membrane. It catalyses the reaction glucuronate acceptor + UDP-alpha-D-glucuronate = acceptor beta-D-glucuronoside + UDP + H(+). It carries out the reaction 17alpha-estradiol + UDP-alpha-D-glucuronate = 17alpha-estradiol 3-O-(beta-D-glucuronate) + UDP + H(+). The enzyme catalyses 17alpha-estradiol + UDP-alpha-D-glucuronate = 17alpha-estradiol 17-O-(beta-D-glucuronate) + UDP + H(+). The catalysed reaction is 17beta-estradiol + UDP-alpha-D-glucuronate = 17beta-estradiol 17-O-(beta-D-glucuronate) + UDP + H(+). It catalyses the reaction 17beta-hydroxy-5alpha-androstan-3-one + UDP-alpha-D-glucuronate = 5alpha-dihydrotestosterone 17-O-(beta-D-glucuronate) + UDP + H(+). It carries out the reaction testosterone + UDP-alpha-D-glucuronate = testosterone 17-O-(beta-D-glucuronate) + UDP + H(+). Its function is as follows. UDP-glucuronosyltransferase (UGT) that catalyzes phase II biotransformation reactions in which lipophilic substrates are conjugated with glucuronic acid to increase the metabolite's water solubility, thereby facilitating excretion into either the urine or bile. Catalyzes the glucuronidation of endogenous steroid hormones such as androgens (epitestosterone, androsterone) and estrogens (estradiol, epiestradiol). The chain is UDP-glucuronosyltransferase 2B17 from Rattus norvegicus (Rat).